Consider the following 329-residue polypeptide: Endochitinase A (329 aa).

Positions 1–23 (MRLCKFTALSSLLFSLLLLSASA) are cleaved as a signal peptide. The Chitin-binding type-1 domain occupies 24-65 (EQCGSQAGGARCPSGLCCSKFGWCGNTNDYCGPGNCQSQCPG). Cystine bridges form between Cys26/Cys41, Cys35/Cys47, Cys40/Cys54, and Cys59/Cys63. At Pro67 the chain carries 4-hydroxyproline; partial. 4 positions are modified to 4-hydroxyproline: Pro69, Pro71, Pro72, and Pro74. Pro75 carries the 4-hydroxyproline; partial modification. 3 cysteine pairs are disulfide-bonded: Cys101/Cys163, Cys175/Cys183, and Cys282/Cys314. Residue Glu145 is the Proton donor of the active site. The propeptide at 323–329 (GLLVDTM) is removed in mature form.

Belongs to the glycosyl hydrolase 19 family. Chitinase class I subfamily. Post-translationally, the 4-hydroxyproline residues are not glycosylated in this plant vacuolar protein.

The protein resides in the vacuole. The catalysed reaction is Random endo-hydrolysis of N-acetyl-beta-D-glucosaminide (1-&gt;4)-beta-linkages in chitin and chitodextrins.. Functionally, defense against chitin-containing fungal pathogens. In Nicotiana tabacum (Common tobacco), this protein is Endochitinase A (CHN48).